The chain runs to 367 residues: Probable sugar phosphate/phosphate translocator At1g48230 (367 aa).

A run of 10 helical transmembrane segments spans residues 9–29, 43–63, 76–96, 106–126, 140–160, 163–183, 193–213, 229–249, 257–276, and 280–302; these read LVLT…VILY, LPIT…FLLI, FEIY…SLWF, VAFI…MAVV, MVLV…FNVI, VYQV…QVLL, VTSL…PWYV, WIFF…FLVI, IRVA…TVIF, and TITG…YNYI. A compositionally biased stretch (basic and acidic residues) spans 321–330; sequence ITKDWKEKNS. Positions 321-341 are disordered; the sequence is ITKDWKEKNSSDGGSPRGLEL.

The protein belongs to the TPT transporter family. TPT (TC 2.A.7.9) subfamily.

It is found in the membrane. The sequence is that of Probable sugar phosphate/phosphate translocator At1g48230 from Arabidopsis thaliana (Mouse-ear cress).